Here is a 671-residue protein sequence, read N- to C-terminus: UvrABC system protein B (671 aa).

Residues 31 to 414 (DGFEQGEKAQ…ELNQTDHKVE (384 aa)) enclose the Helicase ATP-binding domain. 44–51 (GATGTGKT) contributes to the ATP binding site. Positions 97-120 (YYDYYQPEAYVPQSDTYIEKDSSI) match the Beta-hairpin motif. The Helicase C-terminal domain occupies 435–601 (QIDDLVGEVN…TIVKPIRDVI (167 aa)). A UVR domain is found at 630-665 (QNMIKTLTAQMQEAAKKLDFEEAANLRDAIMDLKKQ).

It belongs to the UvrB family. As to quaternary structure, forms a heterotetramer with UvrA during the search for lesions. Interacts with UvrC in an incision complex.

It is found in the cytoplasm. Its function is as follows. The UvrABC repair system catalyzes the recognition and processing of DNA lesions. A damage recognition complex composed of 2 UvrA and 2 UvrB subunits scans DNA for abnormalities. Upon binding of the UvrA(2)B(2) complex to a putative damaged site, the DNA wraps around one UvrB monomer. DNA wrap is dependent on ATP binding by UvrB and probably causes local melting of the DNA helix, facilitating insertion of UvrB beta-hairpin between the DNA strands. Then UvrB probes one DNA strand for the presence of a lesion. If a lesion is found the UvrA subunits dissociate and the UvrB-DNA preincision complex is formed. This complex is subsequently bound by UvrC and the second UvrB is released. If no lesion is found, the DNA wraps around the other UvrB subunit that will check the other stand for damage. This chain is UvrABC system protein B, found in Lactobacillus johnsonii (strain CNCM I-12250 / La1 / NCC 533).